Reading from the N-terminus, the 749-residue chain is Pectate disaccharide-lyase (749 aa).

A signal peptide spans 1–26 (MKYAASGLLSVALNSLLLLGSNQRFA). Aspartate 538, aspartate 562, aspartate 563, and aspartate 566 together coordinate Ca(2+). Lysine 595 (proton acceptor) is an active-site residue.

This sequence belongs to the polysaccharide lyase 9 family. Requires Ca(2+) as cofactor.

The protein localises to the secreted. It catalyses the reaction [(1-&gt;4)-alpha-D-galacturonosyl](n) = 4-(4-deoxy-alpha-D-galact-4-enuronosyl)-D-galacturonate + [(1-&gt;4)-alpha-D-galacturonosyl](n-2). Activity on pectate is nearly completely inhibited by ethyleneglycol-bis-(P-aminoethyl ether) N,N'-tetraacetic acid (EGTA), EDTA or nitrilotriacetic acid. Activity is specifically restored by the addition of Ca(2+). Its function is as follows. Exo-cleaving lyase that catalyzes the digestion of pectate. Contributes to pectate catabolism but not to bacterial virulence. In vitro can also use citrus pectin and highly methyl-esterified Link pectin as substrates. The polypeptide is Pectate disaccharide-lyase (Dickeya chrysanthemi (Pectobacterium chrysanthemi)).